Consider the following 480-residue polypeptide: Probable glycine dehydrogenase (decarboxylating) subunit 2 (480 aa).

Lys265 is modified (N6-(pyridoxal phosphate)lysine).

Belongs to the GcvP family. C-terminal subunit subfamily. In terms of assembly, the glycine cleavage system is composed of four proteins: P, T, L and H. In this organism, the P 'protein' is a heterodimer of two subunits. Pyridoxal 5'-phosphate serves as cofactor.

It carries out the reaction N(6)-[(R)-lipoyl]-L-lysyl-[glycine-cleavage complex H protein] + glycine + H(+) = N(6)-[(R)-S(8)-aminomethyldihydrolipoyl]-L-lysyl-[glycine-cleavage complex H protein] + CO2. Its function is as follows. The glycine cleavage system catalyzes the degradation of glycine. The P protein binds the alpha-amino group of glycine through its pyridoxal phosphate cofactor; CO(2) is released and the remaining methylamine moiety is then transferred to the lipoamide cofactor of the H protein. This Thermosipho africanus (strain TCF52B) protein is Probable glycine dehydrogenase (decarboxylating) subunit 2.